A 497-amino-acid polypeptide reads, in one-letter code: Probable cytosol aminopeptidase (497 aa).

Mn(2+) is bound by residues Lys263 and Asp268. Lys275 is a catalytic residue. Positions 286, 345, and 347 each coordinate Mn(2+). Arg349 is a catalytic residue.

Belongs to the peptidase M17 family. It depends on Mn(2+) as a cofactor.

Its subcellular location is the cytoplasm. The enzyme catalyses Release of an N-terminal amino acid, Xaa-|-Yaa-, in which Xaa is preferably Leu, but may be other amino acids including Pro although not Arg or Lys, and Yaa may be Pro. Amino acid amides and methyl esters are also readily hydrolyzed, but rates on arylamides are exceedingly low.. It carries out the reaction Release of an N-terminal amino acid, preferentially leucine, but not glutamic or aspartic acids.. In terms of biological role, presumably involved in the processing and regular turnover of intracellular proteins. Catalyzes the removal of unsubstituted N-terminal amino acids from various peptides. This chain is Probable cytosol aminopeptidase, found in Allorhizobium ampelinum (strain ATCC BAA-846 / DSM 112012 / S4) (Agrobacterium vitis (strain S4)).